The primary structure comprises 375 residues: 23S rRNA (uracil(747)-C(5))-methyltransferase RlmC (375 aa).

[4Fe-4S] cluster is bound by residues Cys3, Cys11, Cys14, and Cys87. The S-adenosyl-L-methionine site is built by Gln212, Phe241, Glu262, and Asn307. Catalysis depends on Cys334, which acts as the Nucleophile.

It belongs to the class I-like SAM-binding methyltransferase superfamily. RNA M5U methyltransferase family. RlmC subfamily.

It carries out the reaction uridine(747) in 23S rRNA + S-adenosyl-L-methionine = 5-methyluridine(747) in 23S rRNA + S-adenosyl-L-homocysteine + H(+). Functionally, catalyzes the formation of 5-methyl-uridine at position 747 (m5U747) in 23S rRNA. The chain is 23S rRNA (uracil(747)-C(5))-methyltransferase RlmC from Serratia proteamaculans (strain 568).